A 102-amino-acid polypeptide reads, in one-letter code: Movement protein (102 aa).

Residues 43–63 (VVALIVILFAVGIVYLAYTLF) form a helical membrane-spanning segment. Residues 82–102 (IGFGNTPLRRPGEGNPNGGPV) are disordered.

It belongs to the mastrevirus movement protein family. In terms of assembly, interacts with the capsid protein (CP). Part of a MP-CP-viral DNA complex.

The protein resides in the host membrane. Functionally, involved in the viral transport within, and between cells. The protein is Movement protein of Tobacco yellow dwarf virus (strain Australia) (TYDV).